A 488-amino-acid chain; its full sequence is Ribulose bisphosphate carboxylase large chain (488 aa).

Positions 127 and 177 each coordinate substrate. Lys179 (proton acceptor) is an active-site residue. Residue Lys181 coordinates substrate. 3 residues coordinate Mg(2+): Lys205, Asp207, and Glu208. Position 205 is an N6-carboxylysine (Lys205). His297 acts as the Proton acceptor in catalysis. Substrate contacts are provided by Arg298, His330, and Ser382.

Belongs to the RuBisCO large chain family. Type I subfamily. As to quaternary structure, heterohexadecamer of 8 large chains and 8 small chains. Mg(2+) is required as a cofactor.

The protein localises to the plastid. It localises to the chloroplast. It catalyses the reaction 2 (2R)-3-phosphoglycerate + 2 H(+) = D-ribulose 1,5-bisphosphate + CO2 + H2O. It carries out the reaction D-ribulose 1,5-bisphosphate + O2 = 2-phosphoglycolate + (2R)-3-phosphoglycerate + 2 H(+). Its function is as follows. RuBisCO catalyzes two reactions: the carboxylation of D-ribulose 1,5-bisphosphate, the primary event in carbon dioxide fixation, as well as the oxidative fragmentation of the pentose substrate in the photorespiration process. Both reactions occur simultaneously and in competition at the same active site. This is Ribulose bisphosphate carboxylase large chain from Emiliania huxleyi (Coccolithophore).